The following is a 276-amino-acid chain: Glutamate racemase (276 aa).

Substrate-binding positions include 12-13 and 44-45; these read DS and YG. Cysteine 76 acts as the Proton donor/acceptor in catalysis. Residue 77–78 participates in substrate binding; that stretch reads NT. The Proton donor/acceptor role is filled by cysteine 187. 188–189 lines the substrate pocket; sequence TH.

This sequence belongs to the aspartate/glutamate racemases family.

It carries out the reaction L-glutamate = D-glutamate. It functions in the pathway cell wall biogenesis; peptidoglycan biosynthesis. Its function is as follows. Provides the (R)-glutamate required for cell wall biosynthesis. The protein is Glutamate racemase of Granulibacter bethesdensis (strain ATCC BAA-1260 / CGDNIH1).